A 143-amino-acid chain; its full sequence is Transcriptional regulator SlyA (143 aa).

Residues 2–135 enclose the HTH marR-type domain; the sequence is ESTLGSDLAR…LSGLIDKLER (134 aa). The segment at residues 49-72 is a DNA-binding region (H-T-H motif); it reads QIQLAKAIGIEQPSLVRTLDQLEE.

It belongs to the SlyA family. In terms of assembly, homodimer.

Functionally, transcription regulator that can specifically activate or repress expression of target genes. This is Transcriptional regulator SlyA from Yersinia enterocolitica serotype O:8 / biotype 1B (strain NCTC 13174 / 8081).